Consider the following 281-residue polypeptide: MSTRTVKVGGIDIANDRPFVLFGGMNVLESRDLALQVAESYVKVTQKLGIPYVFKASFDKANRSSINSYRGPGLDEGLRIFEEIKRTFNVPVITDIHEPHQAQPVAEVADIIQLPAFLSRQTDLVAAMARTGCPVNIKKAQFLAPQEMKHILSKCEEAGNDQLILCERGSSFGYNNLVVDMLGFGIMKQFGYPVFFDVTHSLQMPGGLSSSAGGRREQVVQLARSGMAVGLAGLFLEAHPDPDVAKCDGPCALRLSQLEPFLAQMKALDDMVKQFPNIDTA.

The protein belongs to the KdsA family.

It localises to the cytoplasm. The catalysed reaction is D-arabinose 5-phosphate + phosphoenolpyruvate + H2O = 3-deoxy-alpha-D-manno-2-octulosonate-8-phosphate + phosphate. The protein operates within carbohydrate biosynthesis; 3-deoxy-D-manno-octulosonate biosynthesis; 3-deoxy-D-manno-octulosonate from D-ribulose 5-phosphate: step 2/3. It participates in bacterial outer membrane biogenesis; lipopolysaccharide biosynthesis. The protein is 2-dehydro-3-deoxyphosphooctonate aldolase of Hahella chejuensis (strain KCTC 2396).